Here is a 410-residue protein sequence, read N- to C-terminus: Polyprenol-phosphate-mannose-dependent alpha-(1-2)-phosphatidylinositol pentamannoside mannosyltransferase (410 aa).

The next 10 helical transmembrane spans lie at 31–51, 96–116, 160–180, 188–208, 214–234, 276–296, 306–326, 328–348, 351–371, and 384–404; these read LAPMLLVVSILARLAWTYLVP, FAAIVFYPLHLLPFGVVAFIW, TFDYGQVNVVLVLAVLCAVST, LLVGLAAGIKLTPAVAGLYFL, AAVACSAAVFFATVGVSWLVV, GFGPLVLIGIGITAVLALLAW, LGGILVVSLFGLVLSPISWTH, WVWLIPLMMWLLHGPLSALRG, ILGWGWLALTLLGVPWLLSFA, and LAWAGLVYIVATLATLGWIAF.

It belongs to the glycosyltransferase 87 family.

The protein resides in the cell membrane. The protein operates within phospholipid metabolism; phosphatidylinositol metabolism. In terms of biological role, catalyzes the alpha-1,2 addition of a mannose residue from polyprenol-phosphate-mannose (PPM) to a monoacyl phosphatidylinositol tetramannoside (AcPIM4) to generate a monoacyl phosphatidylinositol pentamannoside (AcPIM5). The sequence is that of Polyprenol-phosphate-mannose-dependent alpha-(1-2)-phosphatidylinositol pentamannoside mannosyltransferase from Mycolicibacterium smegmatis (strain ATCC 700084 / mc(2)155) (Mycobacterium smegmatis).